The primary structure comprises 243 residues: UPF0246 protein SEQ_2141 (243 aa).

Belongs to the UPF0246 family.

This chain is UPF0246 protein SEQ_2141, found in Streptococcus equi subsp. equi (strain 4047).